The sequence spans 1064 residues: Lethal(2) giant larvae protein homolog 1 (1064 aa).

WD repeat units follow at residues 38–71 (SALA…FTGL), 78–119 (VTQM…ALSF), 139–176 (VTVV…GQTL), 200–234 (SLQG…DHIF), 240–272 (LESL…GSFP), 290–332 (AINK…ETLV), 340–374 (IIDF…VLDL), 396–474 (TCSA…YKLS), 518–593 (QKVA…RVLV), 602–663 (TAVT…LRQS), 723–783 (VRCL…KEVQ), 792–844 (AIAV…VSAK), 849–902 (LTAH…VHYS), and 916–939 (VFTR…SLSA). S663 carries the post-translational modification Phosphoserine. T958 bears the Phosphothreonine mark. Residues 966–1010 (ESPKLSQANGTPSILLAPQSLDGSPDPAHSMGPDTPEPPEAALSP) are disordered. Residues S967 and S985 each carry the phosphoserine modification.

It belongs to the WD repeat L(2)GL family. In terms of assembly, associated with nonmuscle myosin II heavy chain. Interacts with PRKCI/aPKC, PARD6B/Par-6 and PARD6A. Interacts with STX4A. Interacts with RAB10 (GDP-bound form); the interaction is direct and promotes RAB10 association with membranes and activation through competition with the Rab inhibitor GDI1. Interacts with DCAF1. Post-translationally, phosphorylated at least at Ser-663 by PRKCI. As to expression, expressed in brain, kidney, and muscle but is barely seen in heart and placenta. Down-regulated or lost in all cell lines and in most of the tumor samples analyzed. Loss was associated with advanced stage of the disease.

The protein localises to the early endosome membrane. It localises to the golgi apparatus. Its subcellular location is the trans-Golgi network membrane. The protein resides in the golgi apparatus membrane. It is found in the cell projection. The protein localises to the axon. It localises to the cytoplasm. Its subcellular location is the cytoskeleton. Cortical cytoskeleton protein found in a complex involved in maintaining cell polarity and epithelial integrity. Involved in the regulation of mitotic spindle orientation, proliferation, differentiation and tissue organization of neuroepithelial cells. Involved in axonogenesis through RAB10 activation thereby regulating vesicular membrane trafficking toward the axonal plasma membrane. The sequence is that of Lethal(2) giant larvae protein homolog 1 (LLGL1) from Homo sapiens (Human).